A 327-amino-acid chain; its full sequence is BarH-like 1 homeobox protein (327 aa).

Disordered stretches follow at residues 1 to 90, 112 to 184, and 305 to 327; these read MEGS…AQSR, APYS…ARTA, and GASEPPPPLPPLAGVLPRAAQPR. Low complexity predominate over residues 33–54; the sequence is RSPLELSPRSESSSDCSSPASP. The segment covering 79–90 has biased composition (polar residues); the sequence is QPGQLSAPAQSR. Composition is skewed to basic and acidic residues over residues 133–143 and 152–166; these read AAEDFRDKLDK and SEYKVKEEGDREISS. Residues 178–237 constitute a DNA-binding region (homeobox); the sequence is PRKARTAFTDHQLAQLERSFERQKYLSVQDRMELAASLNLTDTQVKTWYQNRRTKWKRQT. The span at 316–327 shows a compositional bias: low complexity; the sequence is LAGVLPRAAQPR.

Belongs to the BAR homeobox family.

It is found in the nucleus. This chain is BarH-like 1 homeobox protein (BARHL1), found in Homo sapiens (Human).